Here is a 417-residue protein sequence, read N- to C-terminus: Diaminopimelate decarboxylase (417 aa).

At lysine 61 the chain carries N6-(pyridoxal phosphate)lysine. Pyridoxal 5'-phosphate-binding positions include glycine 240 and 275–278 (EPGR). 3 residues coordinate substrate: arginine 278, arginine 314, and tyrosine 318. Catalysis depends on cysteine 344, which acts as the Proton donor. 2 residues coordinate substrate: glutamate 345 and tyrosine 372. Position 372 (tyrosine 372) interacts with pyridoxal 5'-phosphate.

It belongs to the Orn/Lys/Arg decarboxylase class-II family. LysA subfamily. Homodimer. Pyridoxal 5'-phosphate is required as a cofactor.

It catalyses the reaction meso-2,6-diaminopimelate + H(+) = L-lysine + CO2. Its pathway is amino-acid biosynthesis; L-lysine biosynthesis via DAP pathway; L-lysine from DL-2,6-diaminopimelate: step 1/1. Functionally, specifically catalyzes the decarboxylation of meso-diaminopimelate (meso-DAP) to L-lysine. This Vibrio cholerae serotype O1 (strain ATCC 39315 / El Tor Inaba N16961) protein is Diaminopimelate decarboxylase (lysA).